Reading from the N-terminus, the 160-residue chain is MLNDKIKELITPTAKTLGYKVINVSFIVKPAILKIVIDRFDEKKVNVLDCQVFSKAISAVLDVENIIPGKYFLEVESAGIERSLMDLEDFIKFLGYTIQVKLVAAINENKKYIGVISNIKGQEITLNLQNDSTIAIDYDNIKVAKIVFTDEMFRQITKNY.

It belongs to the RimP family.

It is found in the cytoplasm. In terms of biological role, required for maturation of 30S ribosomal subunits. This chain is Ribosome maturation factor RimP, found in Orientia tsutsugamushi (strain Boryong) (Rickettsia tsutsugamushi).